The sequence spans 61 residues: Small ribosomal subunit protein uS14C (61 aa).

Residues Cys24, Cys27, Cys40, and Cys43 each contribute to the Zn(2+) site.

Belongs to the universal ribosomal protein uS14 family. Zinc-binding uS14 subfamily. As to quaternary structure, part of the 30S ribosomal subunit. Contacts proteins S3 and S10. It depends on Zn(2+) as a cofactor.

Its function is as follows. Binds 16S rRNA, required for the assembly of 30S particles and may also be responsible for determining the conformation of the 16S rRNA at the A site. The protein is Small ribosomal subunit protein uS14C of Enterococcus faecalis (strain ATCC 700802 / V583).